A 487-amino-acid polypeptide reads, in one-letter code: ATP synthase subunit beta 1 (487 aa).

162–169 contributes to the ATP binding site; it reads GGAGVGKT.

It belongs to the ATPase alpha/beta chains family. In terms of assembly, F-type ATPases have 2 components, CF(1) - the catalytic core - and CF(0) - the membrane proton channel. CF(1) has five subunits: alpha(3), beta(3), gamma(1), delta(1), epsilon(1). CF(0) has three main subunits: a(1), b(2) and c(9-12). The alpha and beta chains form an alternating ring which encloses part of the gamma chain. CF(1) is attached to CF(0) by a central stalk formed by the gamma and epsilon chains, while a peripheral stalk is formed by the delta and b chains.

It localises to the cell inner membrane. The enzyme catalyses ATP + H2O + 4 H(+)(in) = ADP + phosphate + 5 H(+)(out). Functionally, produces ATP from ADP in the presence of a proton gradient across the membrane. The catalytic sites are hosted primarily by the beta subunits. The sequence is that of ATP synthase subunit beta 1 from Gluconobacter oxydans (strain 621H) (Gluconobacter suboxydans).